Consider the following 349-residue polypeptide: Hyaluronidase Tab y 2.0101 (349 aa).

The N-terminal stretch at 1–25 (MKLHQGLVCLSVLILLPTCILGDRK) is a signal peptide. Intrachain disulfides connect Cys-37–Cys-328 and Cys-205–Cys-216. N-linked (GlcNAc...) asparagine glycans are attached at residues Asn-41, Asn-81, Asn-99, and Asn-119. Glu-129 (proton donor) is an active-site residue. Asn-147 carries N-linked (GlcNAc...) asparagine glycosylation. Asn-251 and Asn-297 each carry an N-linked (GlcNAc...) asparagine glycan.

It belongs to the glycosyl hydrolase 56 family. In terms of tissue distribution, expressed in salivary glands.

The protein localises to the secreted. The catalysed reaction is Random hydrolysis of (1-&gt;4)-linkages between N-acetyl-beta-D-glucosamine and D-glucuronate residues in hyaluronate.. Hydrolyzes high molecular weight hyaluronic acid to produce small oligosaccharides. In Tabanus yao (Horsefly), this protein is Hyaluronidase Tab y 2.0101.